The sequence spans 1729 residues: 182 kDa tankyrase-1-binding protein (1729 aa).

Over residues 1-12 (MKVSTLRESSAM) the composition is skewed to polar residues. A disordered region spans residues 1 to 151 (MKVSTLRESS…VRKAPAPFRP (151 aa)). Ser14 carries the phosphoserine modification. A compositionally biased stretch (low complexity) spans 46 to 63 (ALPAKPALPAKPSLLVPV). A compositionally biased stretch (basic and acidic residues) spans 117-127 (TGKEEAGKEEP). Thr131 is subject to Phosphothreonine. 3 positions are modified to phosphoserine: Ser178, Ser221, and Ser228. Disordered regions lie at residues 184–450 (GSRL…LAAL), 484–603 (PSGL…ESPL), and 657–880 (ETTQ…SSRD). The interval 210-1572 (DEDGSTLFRG…TEILDSAMYR (1363 aa)) is acidic. Basic and acidic residues predominate over residues 230–245 (AECREEHSKTPEERSL). Thr239 is subject to Phosphothreonine. Phosphoserine is present on residues Ser287 and Ser301. A compositionally biased stretch (low complexity) spans 352-363 (PSPGLPAEGAPE). Pro residues predominate over residues 364–374 (APRPSSPPPEV). Phosphoserine is present on residues Ser429, Ser435, Ser437, Ser494, and Ser498. 3 stretches are compositionally biased toward low complexity: residues 500–512 (ITEASEAAEAAEA), 524–541 (VSQQGQGAGSAPSGSGSS), and 572–583 (LPTTEGTPGLPL). Phosphothreonine is present on Thr501. Phosphoserine occurs at positions 601, 672, 691, 695, 712, 724, 744, 762, and 806. Residues 738 to 753 (PQPSSFSPSSWCQGAS) show a composition bias toward polar residues. The span at 803–812 (ASSSQDQSKV) shows a compositional bias: polar residues. Thr833 carries the post-translational modification Phosphothreonine. Phosphoserine is present on residues Ser836, Ser851, Ser872, Ser877, Ser882, and Ser893. Over residues 858-872 (RDAELQDQEFGKRDS) the composition is skewed to basic and acidic residues. Position 897 is a phosphotyrosine (Tyr897). Residues 897 to 1083 (YASQDANEQG…ADLEDGEMGK (187 aa)) form a disordered region. A phosphoserine mark is found at Ser899, Ser920, Ser936, and Ser976. A Phosphothreonine modification is found at Thr979. Ser983, Ser987, Ser1004, Ser1008, Ser1013, Ser1024, Ser1029, Ser1054, Ser1073, Ser1091, Ser1103, Ser1133, Ser1138, Ser1158, Ser1178, Ser1248, and Ser1253 each carry phosphoserine. A compositionally biased stretch (basic and acidic residues) spans 1012-1021 (GSRDAGRPGE). Positions 1043-1054 (RDQSSWQNSDAS) are enriched in polar residues. A disordered region spans residues 1240–1302 (EVGEGGGHSQ…GAVCSPGESK (63 aa)). The residue at position 1282 (Thr1282) is a Phosphothreonine. Phosphoserine occurs at positions 1297, 1328, 1331, 1383, and 1385. Residues 1362 to 1561 (AREHGVGGVS…SPSQDFSFIE (200 aa)) form a disordered region. The span at 1389–1400 (EARDPLEARELG) shows a compositional bias: basic and acidic residues. Positions 1406-1419 (GPETQGEDYSSSSL) are enriched in polar residues. Phosphoserine is present on residues Ser1435, Ser1439, Ser1450, Ser1452, Ser1473, Ser1476, Ser1503, and Ser1506. The interval 1450 to 1542 (SGSQGLLEEM…SDQGPAQTSR (93 aa)) is tankyrase-binding. Thr1518 carries the phosphothreonine modification. Ser1533, Ser1545, and Ser1558 each carry phosphoserine. At Thr1563 the chain carries Phosphothreonine. Positions 1575-1729 (ANLGRKRGHR…QALKLKKKKV (155 aa)) are disordered. The segment covering 1577-1586 (LGRKRGHRAP) has biased composition (basic residues). Over residues 1602-1615 (SDAHLFQDSTEPRA) the composition is skewed to basic and acidic residues. Residues Ser1620, Ser1621, and Ser1631 each carry the phosphoserine modification. The Nuclear localization signal signature appears at 1629 to 1635 (PQSRRTR). Lys1644 carries the N6-methyllysine modification. 3 positions are modified to phosphoserine: Ser1652, Ser1666, and Ser1715. The segment covering 1665-1679 (RSAEEGELAESKSSQ) has biased composition (basic and acidic residues). The Nuclear localization signal motif lies at 1723–1729 (KLKKKKV).

In terms of assembly, binds to the ANK repeat domain of TNKS1 and TNKS2. ADP-ribosylated by TNKS1 (in vitro). As to expression, detected in testis, ovary, lung, skeletal muscle, heart, prostate and pancreas, and at very low levels in brain and peripheral blood leukocytes.

The protein localises to the nucleus. The protein resides in the cytoplasm. It localises to the cytoskeleton. It is found in the chromosome. This Homo sapiens (Human) protein is 182 kDa tankyrase-1-binding protein (TNKS1BP1).